We begin with the raw amino-acid sequence, 846 residues long: MKRKSDSEQQPSVQCRKKKRIEELGLNLSSTSDDDTQYSNHGTQESSTSSTSSDSDNEEKRPVFGSGRNETLPDTLAEGSSSHYSMYNSVSQKLMAKMGFREGEGLGKFGQGRKEIVETSKQKGRRGLGMVLKGFEKELNINWRSEPEATAYEEVDWFPECTTDIPDSDELSDWMIVGKRKLIIDDETEFCRDNLLTSLLQCKSAFDELEGEEMRRARTRSNPYEMIRGVFFLNRAAMKMANIDHVFDYMFTNPKDSQGKPKLKDKESELLYFADVCAGPGGFSEYVLWRKKWHAKGFGMTLKGPNDFKLEDFYAAPSELFEPYYGEGGVDGDGDVTRPENITAFRNFILDNTDHKGVHFMMADGGFSVEGQENIQEILSKQLLLCQFLVGLHVIRTGGHFICKTFDLFTPFSVGLIYLLYCCFERVCLFKPLTSRPANSERYVVCRGLKEGIDDVRNYLFNVNRRLNHLRNSDQDVTLVVPLEVLRGDKQFNEYMVRSNESCCEVQIKALAKIHAFVQDSTLSESRQADIRRECLKLWGVPDQARVAPTNTDARTKFFQLIQSQNIEVFGYKPTPLTAKTLEKLIHVFDYRCMVCGSEPKFLLGLGRSQIYTWGGRSNERWTRLDLKTELPRDTLLSVEIVHELKGEGKAQRKISAIHVLDVLFLNGTDVRTQHFTQRIQLAEKFVRAVAKPSRPDMNPIRVKEVYRLEDIEKIFLRLDMKHIKSSGGYLRLSYTGRDDRHFVPCGLYIVKTINEPWSMAYSKSQKRKYFYNSKTKNSQFELPVESIAPFHTCYYERLFWEWGEGVQIHDSQRRDPDSDKLSKDAVLQFIQAHHPCMPSSLTEDR.

The segment at 1 to 81 is disordered; that stretch reads MKRKSDSEQQ…LPDTLAEGSS (81 aa). The short motif at 2 to 20 is the Bipartite nuclear localization signal element; the sequence is KRKSDSEQQPSVQCRKKKR. The segment covering 27-45 has biased composition (polar residues); sequence NLSSTSDDDTQYSNHGTQE. Residues 87–133 enclose the G-patch domain; it reads YNSVSQKLMAKMGFREGEGLGKFGQGRKEIVETSKQKGRRGLGMVLK. Residues 203 to 207 and R218 each bind substrate; that span reads KSAFD. The RrmJ-type SAM-dependent 2'-O-MTase domain occupies 231–450; the sequence is FFLNRAAMKM…ERYVVCRGLK (220 aa). N234 provides a ligand contact to S-adenosyl-L-methionine. Residue K239 is part of the active site. S-adenosyl-L-methionine is bound by residues 277–283 and 335–336; these read CAGPGGF and DV. D364 is a catalytic residue. 374–376 contributes to the substrate binding site; sequence NIQ. K404 (proton acceptor) is an active-site residue. N439 contacts substrate. The WW domain occupies 752-786; the sequence is KTINEPWSMAYSKSQKRKYFYNSKTKNSQFELPVE.

The protein resides in the nucleus. The catalysed reaction is a 5'-end (N(7)-methyl 5'-triphosphoguanosine)-ribonucleoside in mRNA + S-adenosyl-L-methionine = a 5'-end (N(7)-methyl 5'-triphosphoguanosine)-(2'-O-methyl-ribonucleoside) in mRNA + S-adenosyl-L-homocysteine + H(+). In terms of biological role, S-adenosyl-L-methionine-dependent methyltransferase that mediates mRNA cap1 2'-O-ribose methylation to the 5'-cap structure of mRNAs. Methylates the ribose of the first nucleotide of a m(7)GpppG-capped mRNA and small nuclear RNA (snRNA) to produce m(7)GpppRm (cap1). Displays a preference for cap0 transcripts. Cap1 modification is linked to higher levels of translation. May be involved in the interferon response pathway. This chain is Cap-specific mRNA (nucleoside-2'-O-)-methyltransferase 1 (cmtr1), found in Xenopus laevis (African clawed frog).